The following is a 151-amino-acid chain: Methylglyoxal synthase (151 aa).

The MGS-like domain occupies 6-151; sequence RVMPAHKHIA…DYDAYLAERV (146 aa). Substrate contacts are provided by residues His-19, Lys-23, 45–48, and 65–66; these read TGTT and SG. Asp-71 acts as the Proton donor/acceptor in catalysis. His-98 provides a ligand contact to substrate.

The protein belongs to the methylglyoxal synthase family.

The enzyme catalyses dihydroxyacetone phosphate = methylglyoxal + phosphate. Catalyzes the formation of methylglyoxal from dihydroxyacetone phosphate. The polypeptide is Methylglyoxal synthase (Aliivibrio fischeri (strain ATCC 700601 / ES114) (Vibrio fischeri)).